The chain runs to 431 residues: 4-hydroxy-3-methylbut-2-en-1-yl diphosphate synthase (flavodoxin) (431 aa).

Residues 1–21 form a disordered region; that stretch reads MNKLENPSQRDVAGPSPRHKT. Residues Cys310, Cys313, Cys356, and Glu363 each coordinate [4Fe-4S] cluster.

The protein belongs to the IspG family. Requires [4Fe-4S] cluster as cofactor.

It carries out the reaction (2E)-4-hydroxy-3-methylbut-2-enyl diphosphate + oxidized [flavodoxin] + H2O + 2 H(+) = 2-C-methyl-D-erythritol 2,4-cyclic diphosphate + reduced [flavodoxin]. It participates in isoprenoid biosynthesis; isopentenyl diphosphate biosynthesis via DXP pathway; isopentenyl diphosphate from 1-deoxy-D-xylulose 5-phosphate: step 5/6. Its function is as follows. Converts 2C-methyl-D-erythritol 2,4-cyclodiphosphate (ME-2,4cPP) into 1-hydroxy-2-methyl-2-(E)-butenyl 4-diphosphate. The sequence is that of 4-hydroxy-3-methylbut-2-en-1-yl diphosphate synthase (flavodoxin) from Nitrobacter hamburgensis (strain DSM 10229 / NCIMB 13809 / X14).